An 865-amino-acid polypeptide reads, in one-letter code: SWI/SNF chromatin-remodeling complex subunit sol1 (865 aa).

4 disordered regions span residues 1–34 (MNNQGFVPASDYPTAVSYPTQGQSYNTQEEQPAY), 54–92 (MMNTSENEPNNLAHSQPFRQSPSTQRNLPNQSFDFASNG), 116–143 (QEKEAAMQQQQQQQQQQQLYQRQMQSRE), and 163–183 (VRQTPQPAPSPNTPSGNANQL). The segment covering 17–30 (SYPTQGQSYNTQEE) has biased composition (polar residues). Positions 121 to 139 (AMQQQQQQQQQQQLYQRQM) are enriched in low complexity. The ARID domain maps to 188–278 (AASFDKFMVS…YLLPYEEAWL (91 aa)). A disordered region spans residues 288-380 (QQAKANHSAN…QTSSSAAPVD (93 aa)). Over residues 328-353 (HSKSPSPAFTANRFSPAAPTTVSSER) the composition is skewed to polar residues. The segment covering 356–368 (PPYPSAPTRPTPP) has biased composition (pro residues). A phosphoserine mark is found at Ser-852 and Ser-855.

The protein belongs to the SWI1 family. In terms of assembly, component of the SWI/SNF global transcription activator complex composed of at least arp9, arp42, snf5, snf22, snf30, sbf59, sol1, ssr1, ssr2, ssr3, ssr4 and tfg3.

Its subcellular location is the nucleus. Component of the SWI/SNF complex, an ATP-dependent chromatin remodeling complex, required for the positive and negative regulation of gene expression of a large number of genes. It changes chromatin structure by altering DNA-histone contacts within a nucleosome, leading eventually to a change in nucleosome position, thus facilitating or repressing binding of gene-specific transcription factors. The sequence is that of SWI/SNF chromatin-remodeling complex subunit sol1 (sol1) from Schizosaccharomyces pombe (strain 972 / ATCC 24843) (Fission yeast).